A 429-amino-acid chain; its full sequence is L-cysteine:1D-myo-inositol 2-amino-2-deoxy-alpha-D-glucopyranoside ligase (429 aa).

Residue Cys-60 participates in Zn(2+) binding. L-cysteinyl-5'-AMP-binding positions include Cys-60 to Thr-63, Thr-75, and Asn-98 to Thr-100. The 'HIGH' region motif lies at Ile-62 to His-72. The 'ERGGDP' region motif lies at Glu-204–Pro-209. Trp-244 contacts L-cysteinyl-5'-AMP. Cys-248 serves as a coordination point for Zn(2+). L-cysteinyl-5'-AMP is bound at residue Gly-266–Asp-268. A Zn(2+)-binding site is contributed by His-273. Ile-300 lines the L-cysteinyl-5'-AMP pocket. A 'KMSKS' region motif is present at residues Lys-306–Ser-310.

It belongs to the class-I aminoacyl-tRNA synthetase family. MshC subfamily. In terms of assembly, monomer. Requires Zn(2+) as cofactor.

It carries out the reaction 1D-myo-inositol 2-amino-2-deoxy-alpha-D-glucopyranoside + L-cysteine + ATP = 1D-myo-inositol 2-(L-cysteinylamino)-2-deoxy-alpha-D-glucopyranoside + AMP + diphosphate + H(+). In terms of biological role, catalyzes the ATP-dependent condensation of GlcN-Ins and L-cysteine to form L-Cys-GlcN-Ins. This Mycolicibacterium vanbaalenii (strain DSM 7251 / JCM 13017 / BCRC 16820 / KCTC 9966 / NRRL B-24157 / PYR-1) (Mycobacterium vanbaalenii) protein is L-cysteine:1D-myo-inositol 2-amino-2-deoxy-alpha-D-glucopyranoside ligase.